Consider the following 475-residue polypeptide: Ribulose bisphosphate carboxylase large chain (475 aa).

Positions 1–2 (MS) are excised as a propeptide. P3 carries the post-translational modification N-acetylproline. N6,N6,N6-trimethyllysine is present on K14. Residues N123 and T173 each contribute to the substrate site. Residue K175 is the Proton acceptor of the active site. Residue K177 coordinates substrate. Mg(2+) contacts are provided by K201, D203, and E204. Residue K201 is modified to N6-carboxylysine. The active-site Proton acceptor is the H294. Substrate-binding residues include R295, H327, and S379.

It belongs to the RuBisCO large chain family. Type I subfamily. Heterohexadecamer of 8 large chains and 8 small chains; disulfide-linked. The disulfide link is formed within the large subunit homodimers. The cofactor is Mg(2+). Post-translationally, the disulfide bond which can form in the large chain dimeric partners within the hexadecamer appears to be associated with oxidative stress and protein turnover.

The protein resides in the plastid. It localises to the chloroplast. It carries out the reaction 2 (2R)-3-phosphoglycerate + 2 H(+) = D-ribulose 1,5-bisphosphate + CO2 + H2O. The enzyme catalyses D-ribulose 1,5-bisphosphate + O2 = 2-phosphoglycolate + (2R)-3-phosphoglycerate + 2 H(+). Its function is as follows. RuBisCO catalyzes two reactions: the carboxylation of D-ribulose 1,5-bisphosphate, the primary event in carbon dioxide fixation, as well as the oxidative fragmentation of the pentose substrate in the photorespiration process. Both reactions occur simultaneously and in competition at the same active site. The chain is Ribulose bisphosphate carboxylase large chain from Pelargonium hortorum (Common geranium).